Consider the following 572-residue polypeptide: Urease subunit alpha (572 aa).

Histidine 139, histidine 141, and lysine 222 together coordinate Ni(2+). N6-carboxylysine is present on lysine 222. Histidine 224 provides a ligand contact to substrate. The Ni(2+) site is built by histidine 251 and histidine 277. The Proton donor role is filled by histidine 325. Aspartate 365 contributes to the Ni(2+) binding site.

It belongs to the metallo-dependent hydrolases superfamily. Urease alpha subunit family. As to quaternary structure, heterotrimer of UreA (gamma), UreB (beta) and UreC (alpha) subunits. Three heterotrimers associate to form the active enzyme. It depends on Ni cation as a cofactor. Post-translationally, carboxylation allows a single lysine to coordinate two nickel ions.

Its subcellular location is the cytoplasm. It carries out the reaction urea + 2 H2O + H(+) = hydrogencarbonate + 2 NH4(+). Its pathway is nitrogen metabolism; urea degradation; CO(2) and NH(3) from urea (urease route): step 1/1. This is Urease subunit alpha from Acetivibrio thermocellus (strain ATCC 27405 / DSM 1237 / JCM 9322 / NBRC 103400 / NCIMB 10682 / NRRL B-4536 / VPI 7372) (Clostridium thermocellum).